A 102-amino-acid chain; its full sequence is NADH-quinone oxidoreductase subunit K 1 (102 aa).

Transmembrane regions (helical) follow at residues Leu-5–Ala-25, Val-30–Gly-50, and Val-62–Val-82.

Belongs to the complex I subunit 4L family. In terms of assembly, NDH-1 is composed of 14 different subunits. Subunits NuoA, H, J, K, L, M, N constitute the membrane sector of the complex.

Its subcellular location is the cell inner membrane. It catalyses the reaction a quinone + NADH + 5 H(+)(in) = a quinol + NAD(+) + 4 H(+)(out). NDH-1 shuttles electrons from NADH, via FMN and iron-sulfur (Fe-S) centers, to quinones in the respiratory chain. The immediate electron acceptor for the enzyme in this species is believed to be ubiquinone. Couples the redox reaction to proton translocation (for every two electrons transferred, four hydrogen ions are translocated across the cytoplasmic membrane), and thus conserves the redox energy in a proton gradient. This chain is NADH-quinone oxidoreductase subunit K 1, found in Geobacter sp. (strain M21).